The primary structure comprises 447 residues: MIKIRRGLDLPINGKPNQSIEDGPQVRQVALIGFDYQGMKPTMAVKVGDRVKLGQELFADKKIEGVIYTSPASGVVSAIHRGDQRVFHSIVIDVEGDDALAFNQYAAADLAGLSAEQVQQNLVQSGLWTAFRTRPYSKSPTPGSKPHSIFVQAIDTNPLAADPAVIIAAKADAFANGLTLLARLTEGKVFVCQAEAANLPKGQGANIAYESFAGVHPAGNPGTHIHYLDPVSASKTVWTIGYQDVIAIGELFTTGRLNVERVVALAGPQVDRPRLVRTRLGANLDQLTQGQLKAGENRVISGSVFGGRRSFGNLTFLGRFHTQVSVLLEGREREMLHYLRAGFNKFSVMGIFISKLFPSKTFDFTTSTNGSERAMVPVGSYEKVMPLDILPTQLLRSLIVGDTETAQKLGCLELDEEDLALCTFVCPGKYEYGPILRNNLTRIENEG.

It belongs to the NqrA family. As to quaternary structure, composed of six subunits; NqrA, NqrB, NqrC, NqrD, NqrE and NqrF.

The enzyme catalyses a ubiquinone + n Na(+)(in) + NADH + H(+) = a ubiquinol + n Na(+)(out) + NAD(+). Its function is as follows. NQR complex catalyzes the reduction of ubiquinone-1 to ubiquinol by two successive reactions, coupled with the transport of Na(+) ions from the cytoplasm to the periplasm. NqrA to NqrE are probably involved in the second step, the conversion of ubisemiquinone to ubiquinol. This chain is Na(+)-translocating NADH-quinone reductase subunit A, found in Cellvibrio japonicus (strain Ueda107) (Pseudomonas fluorescens subsp. cellulosa).